Consider the following 530-residue polypeptide: Type 2 DNA topoisomerase 6 subunit B (530 aa).

ATP-binding positions include Asn-42, Asp-76, 97-98 (SK), 106-113 (GMYGLGVK), and Lys-427.

Belongs to the TOP6B family. Homodimer. Heterotetramer of two Top6A and two Top6B chains.

The catalysed reaction is ATP-dependent breakage, passage and rejoining of double-stranded DNA.. In terms of biological role, relaxes both positive and negative superturns and exhibits a strong decatenase activity. The protein is Type 2 DNA topoisomerase 6 subunit B of Saccharolobus solfataricus (strain ATCC 35092 / DSM 1617 / JCM 11322 / P2) (Sulfolobus solfataricus).